We begin with the raw amino-acid sequence, 177 residues long: Large ribosomal subunit protein uL6 (177 aa).

The protein belongs to the universal ribosomal protein uL6 family. As to quaternary structure, part of the 50S ribosomal subunit.

Its function is as follows. This protein binds to the 23S rRNA, and is important in its secondary structure. It is located near the subunit interface in the base of the L7/L12 stalk, and near the tRNA binding site of the peptidyltransferase center. The polypeptide is Large ribosomal subunit protein uL6 (Vibrio parahaemolyticus serotype O3:K6 (strain RIMD 2210633)).